The following is a 556-amino-acid chain: Dihydroxy-acid dehydratase (556 aa).

Asp-81 contributes to the Mg(2+) binding site. Cys-122 contacts [2Fe-2S] cluster. Mg(2+) contacts are provided by Asp-123 and Lys-124. Position 124 is an N6-carboxylysine (Lys-124). Cys-196 contributes to the [2Fe-2S] cluster binding site. Glu-444 contacts Mg(2+). Ser-470 (proton acceptor) is an active-site residue.

It belongs to the IlvD/Edd family. Homodimer. The cofactor is [2Fe-2S] cluster. Mg(2+) is required as a cofactor.

It carries out the reaction (2R)-2,3-dihydroxy-3-methylbutanoate = 3-methyl-2-oxobutanoate + H2O. The enzyme catalyses (2R,3R)-2,3-dihydroxy-3-methylpentanoate = (S)-3-methyl-2-oxopentanoate + H2O. Its pathway is amino-acid biosynthesis; L-isoleucine biosynthesis; L-isoleucine from 2-oxobutanoate: step 3/4. It participates in amino-acid biosynthesis; L-valine biosynthesis; L-valine from pyruvate: step 3/4. Its function is as follows. Functions in the biosynthesis of branched-chain amino acids. Catalyzes the dehydration of (2R,3R)-2,3-dihydroxy-3-methylpentanoate (2,3-dihydroxy-3-methylvalerate) into 2-oxo-3-methylpentanoate (2-oxo-3-methylvalerate) and of (2R)-2,3-dihydroxy-3-methylbutanoate (2,3-dihydroxyisovalerate) into 2-oxo-3-methylbutanoate (2-oxoisovalerate), the penultimate precursor to L-isoleucine and L-valine, respectively. This chain is Dihydroxy-acid dehydratase, found in Syntrophotalea carbinolica (strain DSM 2380 / NBRC 103641 / GraBd1) (Pelobacter carbinolicus).